A 61-amino-acid polypeptide reads, in one-letter code: Small ribosomal subunit protein uS14 (61 aa).

Zn(2+) contacts are provided by C24, C27, C40, and C43.

Belongs to the universal ribosomal protein uS14 family. Zinc-binding uS14 subfamily. Part of the 30S ribosomal subunit. Contacts proteins S3 and S10. Zn(2+) is required as a cofactor.

In terms of biological role, binds 16S rRNA, required for the assembly of 30S particles and may also be responsible for determining the conformation of the 16S rRNA at the A site. The protein is Small ribosomal subunit protein uS14 of Mycoplasma capricolum subsp. capricolum (strain California kid / ATCC 27343 / NCTC 10154).